Here is a 107-residue protein sequence, read N- to C-terminus: CLAVATA3/ESR (CLE)-related protein 10 (107 aa).

Positions methionine 1–alanine 23 are cleaved as a signal peptide. 2 N-linked (GlcNAc...) asparagine glycosylation sites follow: asparagine 27 and asparagine 30. Positions serine 73–asparagine 107 are disordered. Over residues isoleucine 87–leucine 97 the composition is skewed to basic and acidic residues. A hydroxyproline mark is found at proline 99 and proline 102. The O-linked (Ara...) hydroxyproline glycan is linked to proline 102.

Belongs to the CLV3/ESR signal peptide family. In terms of processing, the O-glycosylation (arabinosylation) of the hydroxyproline Pro-102 enhances binding affinity of the CLE10p peptide for its receptor. Expressed in stems, apex, leaves, flowers, siliques and pollen.

The protein localises to the secreted. It localises to the extracellular space. Extracellular signal peptide that regulates cell fate. Represses root apical meristem maintenance. Regulates the transition of protophloem cells from proliferation to differentiation, thus impinging on postembryonic growth capacity of the root meristem; this signaling pathway requires CRN and CLV2. The polypeptide is CLAVATA3/ESR (CLE)-related protein 10 (Arabidopsis thaliana (Mouse-ear cress)).